A 231-amino-acid polypeptide reads, in one-letter code: MAVFLEAKDAHSVLKRFPRANEFLEELRQGTIERECMEEICSYEEVKEVFENKEKTMEFWKGYPNAVYSVRDPSQSSDAMYVVVPLLGVALLIVIALFIIWRCQLQKATRHHPSYAQNRYLASRAGHTLPRVMVYRGTVHSQGEPSGHREAANSPQVVLGPSRGGRTTVRLESTLYLPELSLSRLSSTTPPPSYEEVTAPQESSSEEASVSYSDPPPKYEEIVAANPGADK.

The propeptide occupies 1–19; sequence MAVFLEAKDAHSVLKRFPR. The region spanning 20 to 65 is the Gla domain; sequence ANEFLEELRQGTIERECMEEICSYEEVKEVFENKEKTMEFWKGYPN. Residues 20-78 are Extracellular-facing; the sequence is ANEFLEELRQGTIERECMEEICSYEEVKEVFENKEKTMEFWKGYPNAVYSVRDPSQSSD. Residues Glu-22, Glu-25, Glu-26, Glu-33, Glu-35, Glu-38, Glu-39, Glu-44, Glu-45, Glu-48, Glu-51, Glu-54, and Glu-58 each carry the 4-carboxyglutamate modification. Cys-36 and Cys-41 are oxidised to a cystine. Residues 79–101 traverse the membrane as a helical segment; the sequence is AMYVVVPLLGVALLIVIALFIIW. The Cytoplasmic portion of the chain corresponds to 102-231; that stretch reads RCQLQKATRH…IVAANPGADK (130 aa). Disordered regions lie at residues 140-165 and 182-231; these read HSQGEPSGHREAANSPQVVLGPSRGG and LSRL…GADK. Residues 202–213 show a composition bias toward low complexity; the sequence is ESSSEEASVSYS.

Post-translationally, gla residues are produced after subsequent post-translational modifications of glutamate by a vitamin K-dependent gamma-carboxylase. Expressed in brain, lung, kidney and heart.

It localises to the membrane. The sequence is that of Transmembrane gamma-carboxyglutamic acid protein 3 (PRRG3) from Homo sapiens (Human).